The following is a 294-amino-acid chain: GTPase Era (294 aa).

The region spanning 3–170 is the Era-type G domain; sequence KSGFISIIGR…LELMIKYMPE (168 aa). Residues 11 to 18 are G1; the sequence is GRPNVGKS. 11-18 is a binding site for GTP; sequence GRPNVGKS. A G2 region spans residues 37–41; the sequence is QTTRN. A G3 region spans residues 58 to 61; sequence DTPG. GTP-binding positions include 58–62 and 120–123; these read DTPGI and NKID. Residues 120–123 form a G4 region; sequence NKID. Residues 149 to 151 are G5; the sequence is ISA. Residues 201–278 form the KH type-2 domain; it reads LSEEVPHGIA…NLKVWVKVKK (78 aa).

The protein belongs to the TRAFAC class TrmE-Era-EngA-EngB-Septin-like GTPase superfamily. Era GTPase family. Monomer.

It is found in the cytoplasm. The protein localises to the cell membrane. An essential GTPase that binds both GDP and GTP, with rapid nucleotide exchange. Plays a role in 16S rRNA processing and 30S ribosomal subunit biogenesis and possibly also in cell cycle regulation and energy metabolism. This is GTPase Era from Clostridium novyi (strain NT).